Consider the following 632-residue polypeptide: Extracellular metalloproteinase 1 (632 aa).

An N-terminal signal peptide occupies residues 1–19; that stretch reads MHGLLLAAGLLSLPLRVLA. A propeptide spanning residues 20–243 is cleaved from the precursor; that stretch reads HPQPSTSLTS…VHNVVDYVSH (224 aa). The N-linked (GlcNAc...) asparagine glycan is linked to Asn-284. His-427 is a Zn(2+) binding site. Glu-428 is a catalytic residue. His-431 is a Zn(2+) binding site. Asn-591 and Asn-620 each carry an N-linked (GlcNAc...) asparagine glycan.

This sequence belongs to the peptidase M36 family. The cofactor is Zn(2+).

It is found in the secreted. Secreted metalloproteinase that allows assimilation of proteinaceous substrates and probably acts as a virulence factor. The chain is Extracellular metalloproteinase 1 (MEP1) from Arthroderma gypseum (strain ATCC MYA-4604 / CBS 118893) (Microsporum gypseum).